Consider the following 241-residue polypeptide: Terpene cyclase pyr4 (241 aa).

Transmembrane regions (helical) follow at residues I20–I40, Y49–I69, A79–A99, L113–A133, A141–M161, G168–L188, and F206–W226.

Belongs to the paxB family.

It localises to the membrane. It catalyses the reaction 2-oxo-3-[(8S)-epoxy-(2E,6E)-farnesyl]-6-(pyridin-3-yl)-2H-pyran-4-olate + H(+) = deacetylpyripyropene E. Its pathway is secondary metabolite biosynthesis; terpenoid biosynthesis. In terms of biological role, terpene cyclase; part of the gene cluster that mediates the biosynthesis of pyripyropene A, a specific human acyl-coenzyme A:cholesterol acyltransferase 2 inhibitor. The first step of the pathway is the synthesis of nicotinyl-CoA from nicotinic acid by the nicotinic acid-CoA ligase pyr1. Nicotinyl-CoA is then a substrate of polyketide synthase pyr2 to produce 4-hydroxy-6-(3-pyridinyl)-2H-pyran-2-one (HPPO) which is further prenylated by the polyprenyl transferase pyr6 to yield farnesyl-HPPO. The next steps consist of an epoxidation of farnesyl-HPPO to epoxyfarnesyl-HPPO by FAD-dependent monooxygenase pyr5 and a cyclization of the terpenoid portion by the terpene cyclase pyr4 to yield deacetyl-pyripyropene E. The 2 cytochrome P450 monooxygenases pyr3 and pyr9, and the 2 acetyltransferases pyr7 and pyr8 are involved in the conversion of deacetyl-pyripyropene E into pyripyropene A through several cycles of oxidation and acetylation steps. Pyr7 acetylates deacetyl-pyripyropene E to pyripyropene E which is oxidized to 11-deacetyl-pyripyropene O by pyr3, which is in turn acetylated into pyripyropene O by pyr8. Pyripyropene O is then oxidized to deacetyl-pyripyropene A by pyr9. Deacetyl-pyripyropene A is finally acetylated to pyripyropene A by pyr8. This Aspergillus fumigatus (strain ATCC MYA-4609 / CBS 101355 / FGSC A1100 / Af293) (Neosartorya fumigata) protein is Terpene cyclase pyr4.